A 149-amino-acid chain; its full sequence is Large ribosomal subunit protein bL9 (149 aa).

This sequence belongs to the bacterial ribosomal protein bL9 family.

Binds to the 23S rRNA. The chain is Large ribosomal subunit protein bL9 from Buchnera aphidicola subsp. Cinara cedri (strain Cc).